Consider the following 278-residue polypeptide: Phosphate import ATP-binding protein PstB (278 aa).

Residues 32-273 enclose the ABC transporter domain; sequence YETRDLNLWY…PSDKRTEDYI (242 aa). Residue 64–71 coordinates ATP; sequence GPSGCGKS.

The protein belongs to the ABC transporter superfamily. Phosphate importer (TC 3.A.1.7) family. As to quaternary structure, the complex is composed of two ATP-binding proteins (PstB), two transmembrane proteins (PstC and PstA) and a solute-binding protein (PstS).

The protein localises to the cell membrane. It carries out the reaction phosphate(out) + ATP + H2O = ADP + 2 phosphate(in) + H(+). Part of the ABC transporter complex PstSACB involved in phosphate import. Responsible for energy coupling to the transport system. In Halalkalibacterium halodurans (strain ATCC BAA-125 / DSM 18197 / FERM 7344 / JCM 9153 / C-125) (Bacillus halodurans), this protein is Phosphate import ATP-binding protein PstB.